We begin with the raw amino-acid sequence, 369 residues long: Anhydro-N-acetylmuramic acid kinase (369 aa).

12-19 (GTSLDGVD) is an ATP binding site.

The protein belongs to the anhydro-N-acetylmuramic acid kinase family.

The enzyme catalyses 1,6-anhydro-N-acetyl-beta-muramate + ATP + H2O = N-acetyl-D-muramate 6-phosphate + ADP + H(+). It functions in the pathway amino-sugar metabolism; 1,6-anhydro-N-acetylmuramate degradation. It participates in cell wall biogenesis; peptidoglycan recycling. Catalyzes the specific phosphorylation of 1,6-anhydro-N-acetylmuramic acid (anhMurNAc) with the simultaneous cleavage of the 1,6-anhydro ring, generating MurNAc-6-P. Is required for the utilization of anhMurNAc either imported from the medium or derived from its own cell wall murein, and thus plays a role in cell wall recycling. The sequence is that of Anhydro-N-acetylmuramic acid kinase from Escherichia coli O6:K15:H31 (strain 536 / UPEC).